Here is a 691-residue protein sequence, read N- to C-terminus: Two-component response regulator ORR21 (691 aa).

Residues 17-132 (KVLVVDDDPT…ELKNIWQHVI (116 aa)) form the Response regulatory domain. Position 68 is a 4-aspartylphosphate (aspartate 68). Positions 139–155 (NKEHEHSGSLDDTDRTR) are enriched in basic and acidic residues. Disordered stretches follow at residues 139-204 (NKEH…KKPR) and 616-647 (SHPG…HGFV). A DNA-binding region (myb-like GARP) is located at residues 199–258 (TSKKPRVVWSVELHQQFVNAVNHLGIDKAVPKKILELMNVPGLTRENVASHLQKFRLYLK). The span at 616–628 (SHPGSSSSSFQSS) shows a compositional bias: low complexity.

Belongs to the ARR family. Type-B subfamily. Two-component system major event consists of a His-to-Asp phosphorelay between a sensor histidine kinase (HK) and a response regulator (RR). In plants, the His-to-Asp phosphorelay involves an additional intermediate named Histidine-containing phosphotransfer protein (HPt). This multistep phosphorelay consists of a His-Asp-His-Asp sequential transfer of a phosphate group between first a His and an Asp of the HK protein, followed by the transfer to a conserved His of the HPt protein and finally the transfer to an Asp in the receiver domain of the RR protein.

It localises to the nucleus. In terms of biological role, transcriptional activator that binds specific DNA sequence. Functions as a response regulator involved in His-to-Asp phosphorelay signal transduction system. Phosphorylation of the Asp residue in the receiver domain activates the ability of the protein to promote the transcription of target genes. May directly activate some type-A response regulators in response to cytokinins. This Oryza sativa subsp. indica (Rice) protein is Two-component response regulator ORR21.